We begin with the raw amino-acid sequence, 273 residues long: Kit ligand (273 aa).

The first 25 residues, 1 to 25 (MKKTQTWIITCIYLQLLLFNPLVKT), serve as a signal peptide directing secretion. Topologically, residues 26–214 (KEICGNPVTD…AKAPEDSGLQ (189 aa)) are extracellular. 2 cysteine pairs are disulfide-bonded: Cys-29/Cys-114 and Cys-68/Cys-163. 4 N-linked (GlcNAc...) asparagine glycosylation sites follow: Asn-90, Asn-97, Asn-145, and Asn-195. The interval 190 to 210 (ASSLRNDSSSSNRKAAKAPED) is disordered. A compositionally biased stretch (low complexity) spans 191–202 (SSLRNDSSSSNR). Residues 215–237 (WTAMALPALISLVIGFAFGALYW) form a helical membrane-spanning segment. Residues 238–273 (KKKQSSLTRAVENIQINEEDNEISMLQQKEREFQEV) are Cytoplasmic-facing.

This sequence belongs to the SCF family. As to quaternary structure, homodimer, non-covalently linked. Heterotetramer with KIT, binding two KIT molecules; thereby mediates KIT dimerization and subsequent activation by autophosphorylation. Post-translationally, a soluble form is produced by proteolytic processing of isoform 1 in the extracellular domain. In terms of tissue distribution, expressed in the cochlea.

The protein localises to the cell membrane. It localises to the cytoplasm. Its subcellular location is the cytoskeleton. The protein resides in the cell projection. It is found in the lamellipodium. The protein localises to the filopodium. It localises to the secreted. In terms of biological role, ligand for the receptor-type protein-tyrosine kinase KIT. Plays an essential role in the regulation of cell survival and proliferation, hematopoiesis, stem cell maintenance, gametogenesis, mast cell development, migration and function, and in melanogenesis. KITLG/SCF binding can activate several signaling pathways. Promotes phosphorylation of PIK3R1, the regulatory subunit of phosphatidylinositol 3-kinase, and subsequent activation of the kinase AKT1. KITLG/SCF and KIT also transmit signals via GRB2 and activation of RAS, RAF1 and the MAP kinases MAPK1/ERK2 and/or MAPK3/ERK1. KITLG/SCF and KIT promote activation of STAT family members STAT1, STAT3 and STAT5. KITLG/SCF and KIT promote activation of PLCG1, leading to the production of the cellular signaling molecules diacylglycerol and inositol 1,4,5-trisphosphate. KITLG/SCF acts synergistically with other cytokines, probably interleukins. The protein is Kit ligand (Kitlg) of Mus musculus (Mouse).